The primary structure comprises 333 residues: GTPase Obg (333 aa).

In terms of domain architecture, Obg spans 1–159; sequence MKFIDEATIT…ATVRLELKLL (159 aa). The interval 63–85 is disordered; that stretch reads KQFAAPNGAPGEGRQKTGKSGDD. A compositionally biased stretch (basic and acidic residues) spans 75-84; the sequence is GRQKTGKSGD. Positions 160–329 constitute an OBG-type G domain; it reads ADVGLIGLPN…LKKHLFELLC (170 aa). Residues 166-173, 191-195, 213-216, 283-286, and 310-312 each bind GTP; these read GLPNAGKS, FTTLS, DIPG, NKMD, and SAA. Mg(2+) is bound by residues serine 173 and threonine 193.

This sequence belongs to the TRAFAC class OBG-HflX-like GTPase superfamily. OBG GTPase family. As to quaternary structure, monomer. Requires Mg(2+) as cofactor.

It localises to the cytoplasm. Its function is as follows. An essential GTPase which binds GTP, GDP and possibly (p)ppGpp with moderate affinity, with high nucleotide exchange rates and a fairly low GTP hydrolysis rate. Plays a role in control of the cell cycle, stress response, ribosome biogenesis and in those bacteria that undergo differentiation, in morphogenesis control. The chain is GTPase Obg from Desulfosudis oleivorans (strain DSM 6200 / JCM 39069 / Hxd3) (Desulfococcus oleovorans).